We begin with the raw amino-acid sequence, 879 residues long: Oxysterol-binding protein-related protein 5 (879 aa).

The disordered stretch occupies residues 1–73; sequence MKEEAFLRRR…TPSSATKVPP (73 aa). Phosphoserine is present on Ser-12. Positions 93 to 123 form a coiled coil; that stretch reads VTKKETLKAQKENYRQEKKRATRQLLSALTD. Residues 126–243 enclose the PH domain; it reads VVIMADSLKI…WLDALELALR (118 aa). Positions 254 to 341 are disordered; the sequence is KPGRDGEPGT…TPGAPVRRGT (88 aa). 2 stretches are compositionally biased toward basic and acidic residues: residues 300 to 309 and 316 to 325; these read FSDKSERENP and TQDHSRKTES. A 1,2-diacyl-sn-glycero-3-phospho-(1D-myo-inositol 4-phosphate) contacts are provided by residues 384-389, 446-449, and 478-479; these read LSRVVL, KPYN, and HH. A 1,2-diacyl-sn-glycero-3-phospho-L-serine contacts are provided by residues 384-389 and Asn-449; that span reads LSRVVL. Residue Ser-504 participates in a 1,2-diacyl-sn-glycero-3-phospho-L-serine binding. Lys-670, Glu-674, and Arg-678 together coordinate a 1,2-diacyl-sn-glycero-3-phospho-(1D-myo-inositol 4-phosphate). A disordered region spans residues 742–806; sequence TTFLGSPGPR…FVPGGESPCP (65 aa). Ser-747 carries the phosphoserine modification. Over residues 750–765 the composition is skewed to basic and acidic residues; sequence PRHERSGPDQRLRKAS. Residues 766-783 are compositionally biased toward polar residues; it reads DQPSGHSQATESSGSTPE. A helical membrane pass occupies residues 860–878; the sequence is SWFLLCVFLACQLFINHIL.

The protein belongs to the OSBP family. Ubiquitously expressed.

It is found in the endoplasmic reticulum membrane. Its function is as follows. Lipid transporter involved in lipid countertransport between the endoplasmic reticulum and the plasma membrane: specifically exchanges phosphatidylserine with phosphatidylinositol 4-phosphate (PI4P), delivering phosphatidylserine to the plasma membrane in exchange for PI4P, which is degraded by the SAC1/SACM1L phosphatase in the endoplasmic reticulum. Binds phosphatidylserine and PI4P in a mutually exclusive manner. May cooperate with NPC1 to mediate the exit of cholesterol from endosomes/lysosomes. Binds 25-hydroxycholesterol and cholesterol. This Homo sapiens (Human) protein is Oxysterol-binding protein-related protein 5 (OSBPL5).